Here is a 425-residue protein sequence, read N- to C-terminus: UDP-N-acetylglucosamine 1-carboxyvinyltransferase (425 aa).

22–23 (KN) contributes to the phosphoenolpyruvate binding site. Arginine 98 lines the UDP-N-acetyl-alpha-D-glucosamine pocket. Cysteine 122 (proton donor) is an active-site residue. Cysteine 122 bears the 2-(S-cysteinyl)pyruvic acid O-phosphothioketal mark. Residues 127–131 (RPVDQ), aspartate 313, and isoleucine 335 contribute to the UDP-N-acetyl-alpha-D-glucosamine site.

This sequence belongs to the EPSP synthase family. MurA subfamily.

It localises to the cytoplasm. It carries out the reaction phosphoenolpyruvate + UDP-N-acetyl-alpha-D-glucosamine = UDP-N-acetyl-3-O-(1-carboxyvinyl)-alpha-D-glucosamine + phosphate. It participates in cell wall biogenesis; peptidoglycan biosynthesis. Functionally, cell wall formation. Adds enolpyruvyl to UDP-N-acetylglucosamine. The protein is UDP-N-acetylglucosamine 1-carboxyvinyltransferase of Xylella fastidiosa (strain 9a5c).